We begin with the raw amino-acid sequence, 158 residues long: 14-3-3 protein gamma (158 aa).

The tract at residues 1 to 158 (AAAMKNVTEL…TSDQQDDDGG (158 aa)) is interaction with SPATA18/MIEAP. A Phosphoserine modification is found at Ser48. Phosphotyrosine is present on Tyr60. Thr72 carries the post-translational modification Phosphothreonine. Ser130 bears the Phosphoserine mark. The residue at position 149 (Thr149) is a Phosphothreonine. The residue at position 150 (Ser150) is a Phosphoserine.

Belongs to the 14-3-3 family. Homodimer. Part of a complex that contains DSG3, PKP1, YAP1 and YWHAG; the complex is required for localization of DSG3 and YAP1 to the cell membrane in keratinocytes. Interacts with SAMSN1. Interacts with RAF1, SSH1 and CRTC2/TORC2. Interacts with ABL1 (phosphorylated form); the interaction retains it in the cytoplasm. Interacts with GAB2. Interacts with MDM4 (phosphorylated); negatively regulates MDM4 activity toward TP53. Interacts with PKA-phosphorylated AANAT and SIRT2. Interacts with the 'Thr-369' phosphorylated form of DAPK2. Interacts with PI4KB, TBC1D22A and TBC1D22B. Interacts with SLITRK1. Interacts with LRRK2; this interaction is dependent on LRRK2 phosphorylation. Interacts with MARK2 and MARK3. Interacts with MEFV. Interacts with ENDOG, TSC2 and PIK3C3; interaction with ENDOG weakens its interaction with TSC2 and PIK3C3. Interacts with (phosphorylated) WDR24. Interacts with BEST1; this interaction promotes L-glutamate channel activity leading to the positive regulation of NMDA glutamate receptor activity through the L-glutamate secretion. Interacts with PKP1 (when phosphorylated); the interaction results in translocation of PKP1 to the cytoplasm and loss of intercellular adhesion in keratinocytes. Interacts with SPATA18/MIEAP; a protein that also plays a role in MALM. In terms of processing, phosphorylated by various PKC isozymes.

The protein resides in the cytoplasm. It localises to the cytosol. The protein localises to the mitochondrion matrix. Functionally, adapter protein implicated in the regulation of a large spectrum of both general and specialized signaling pathways. Binds to a large number of partners, usually by recognition of a phosphoserine or phosphothreonine motif. Binding generally results in the modulation of the activity of the binding partner. Promotes inactivation of WDR24 component of the GATOR2 complex by binding to phosphorylated WDR24. Participates in the positive regulation of NMDA glutamate receptor activity by promoting the L-glutamate secretion through interaction with BEST1. Reduces keratinocyte intercellular adhesion, via interacting with PKP1 and sequestering it in the cytoplasm, thereby reducing its incorporation into desmosomes. Plays a role in mitochondrial protein catabolic process (also named MALM) that promotes the degradation of damaged proteins inside mitochondria. The sequence is that of 14-3-3 protein gamma from Ovis aries (Sheep).